The following is a 402-amino-acid chain: Imidazolonepropionase (402 aa).

Residues H66 and H68 each contribute to the Fe(3+) site. H66 and H68 together coordinate Zn(2+). 3 residues coordinate 4-imidazolone-5-propanoate: R75, Y138, and H171. Y138 contributes to the N-formimidoyl-L-glutamate binding site. H236 provides a ligand contact to Fe(3+). A Zn(2+)-binding site is contributed by H236. Q239 lines the 4-imidazolone-5-propanoate pocket. Residue D311 participates in Fe(3+) binding. D311 is a Zn(2+) binding site. N313 and G315 together coordinate N-formimidoyl-L-glutamate. T316 lines the 4-imidazolone-5-propanoate pocket.

The protein belongs to the metallo-dependent hydrolases superfamily. HutI family. It depends on Zn(2+) as a cofactor. The cofactor is Fe(3+).

Its subcellular location is the cytoplasm. It catalyses the reaction 4-imidazolone-5-propanoate + H2O = N-formimidoyl-L-glutamate. It functions in the pathway amino-acid degradation; L-histidine degradation into L-glutamate; N-formimidoyl-L-glutamate from L-histidine: step 3/3. Functionally, catalyzes the hydrolytic cleavage of the carbon-nitrogen bond in imidazolone-5-propanoate to yield N-formimidoyl-L-glutamate. It is the third step in the universal histidine degradation pathway. The polypeptide is Imidazolonepropionase (Vibrio cholerae serotype O1 (strain ATCC 39541 / Classical Ogawa 395 / O395)).